A 518-amino-acid chain; its full sequence is GMP synthase [glutamine-hydrolyzing] (518 aa).

The Glutamine amidotransferase type-1 domain occupies 6–200 (RLLIIDFGSQ…FVRLAGFKGD (195 aa)). Cysteine 84 serves as the catalytic Nucleophile. Active-site residues include histidine 175 and glutamate 177. In terms of domain architecture, GMPS ATP-PPase spans 201 to 393 (WTMGAYREEA…LGLPESFIGR (193 aa)). 228-234 (SGGVDSS) is an ATP binding site.

In terms of assembly, homodimer.

It catalyses the reaction XMP + L-glutamine + ATP + H2O = GMP + L-glutamate + AMP + diphosphate + 2 H(+). Its pathway is purine metabolism; GMP biosynthesis; GMP from XMP (L-Gln route): step 1/1. Catalyzes the synthesis of GMP from XMP. In Cereibacter sphaeroides (strain ATCC 17029 / ATH 2.4.9) (Rhodobacter sphaeroides), this protein is GMP synthase [glutamine-hydrolyzing].